Consider the following 132-residue polypeptide: Anti-sigma-E factor RseA (132 aa).

Position 36 is a phosphothreonine; by PknB (Thr36). Zn(2+) is bound by residues His63, Cys67, and Cys70. Positions 106-132 are disordered; sequence RTPEVTPDVSEQAKFADDPTRGRRKRR.

It belongs to the zinc-associated anti-sigma factor (ZAS) superfamily. As to quaternary structure, interacts with ECF RNA polymerase sigma factor SigE, interaction is abrogated by treatment of cells with H(2)O(2), detergent or vancomycin (the latter 2 cause surface stress). This probably inhibits the interaction of SigE with the RNA polymerase catalytic core. Zn(2+) is required as a cofactor. Post-translationally, phosphorylated by PknB on Thr-36; can be dephosphorylated (at least in vitro) by PstP. Phosphorylation is the signal for subsequent degradation by the ClpC1-ClpP2 complex. In terms of processing, degraded following vancomycin treatment (surface stress) by a ClpC1-ClpP2 complex.

The protein localises to the cytoplasm. An anti-sigma factor for extracytoplasmic function (ECF) sigma factor SigE. ECF sigma factors are held in an inactive form by an anti-sigma factor. The polypeptide is Anti-sigma-E factor RseA (rseA) (Mycolicibacterium smegmatis (strain ATCC 700084 / mc(2)155) (Mycobacterium smegmatis)).